A 435-amino-acid chain; its full sequence is T-box transcription factor T (435 aa).

The segment at residues 51 to 219 (LWLRFKELTN…YNPFAKAFLD (169 aa)) is a DNA-binding region (T-box). Disordered regions lie at residues 280–310 (PALRNHRPSPYPSPYAHRNNSPTYSDNPSAC) and 384–412 (APLGHAVPAPSASGSPLYEGAPTATDVPD). Residues 297 to 310 (RNNSPTYSDNPSAC) show a composition bias toward polar residues.

In terms of assembly, monomer. Binds DNA as a monomer.

The protein localises to the nucleus. Its function is as follows. Involved in the transcriptional regulation of genes required for mesoderm formation and differentiation. Binds to a palindromic site (called T site) and activates gene transcription when bound to such a site. This chain is T-box transcription factor T, found in Canis lupus familiaris (Dog).